The following is a 216-amino-acid chain: Maintenance of carboxysome distribution protein A (216 aa).

Residues G16, G17, G19, K20, T21, T22, and Q45 each coordinate ATP. T21 contributes to the Mg(2+) binding site.

The protein belongs to the ParA family. McdA subfamily. In terms of assembly, self-associates, associates with McdB.

The protein localises to the cytoplasm. It localises to the nucleoid. The catalysed reaction is ATP + H2O = ADP + phosphate + H(+). Its function is as follows. McdA and McdB together mediate carboxysome positioning on the nucleoid and prevent their aggregation in the cell. McdA is an ATPase that forms dynamic gradients on the nucleoid in response to adapter protein McdB, which associates with carboxysomes. The interplay between McdA gradients on the nucleoid and McdB-bound carboxysomes result in the equal spacing of Cbs along the cell length. In terms of biological role, incorrect positioning (aggregation) of carboxysomes results in reduced CO(2) fixation by encapsulated form 1 ribulose-1,5-bisphosphate carboxylase (RuBisCO, cbbL/cbbS), which leads to slower growth. This chain is Maintenance of carboxysome distribution protein A, found in Halothiobacillus neapolitanus (strain ATCC 23641 / c2) (Thiobacillus neapolitanus).